The primary structure comprises 130 residues: Sigma-w pathway protein YsdB (130 aa).

Residues 2-22 traverse the membrane as a helical segment; it reads FVMVLRIILLALFAYCIYAVV.

It is found in the membrane. May mediate a negative feedback loop that down-regulates the expression of the sigma-W regulon following the activation of sigma-W in response to conditions of cell envelope stress. Might interact with and inhibit the activity of the protease PrsW, or could bind to the anti-sigma-W factor RsiW and thereby protect it from PrsW-mediated cleavage. In Bacillus subtilis (strain 168), this protein is Sigma-w pathway protein YsdB (ysdB).